The sequence spans 367 residues: GDSL esterase/lipase 3 (367 aa).

The first 23 residues, 1–23, serve as a signal peptide directing secretion; the sequence is MVRLVLIIFFVYTIILSIGSINC. Ser-42 acts as the Nucleophile in catalysis. Asn-175, Asn-194, and Asn-321 each carry an N-linked (GlcNAc...) asparagine glycan. Active-site residues include Asp-329 and His-332. N-linked (GlcNAc...) asparagine glycosylation is present at Asn-351.

Belongs to the 'GDSL' lipolytic enzyme family.

The protein localises to the secreted. This is GDSL esterase/lipase 3 (GLIP3) from Arabidopsis thaliana (Mouse-ear cress).